Consider the following 192-residue polypeptide: Adenylate kinase (192 aa).

An ATP-binding site is contributed by 10–15 (GAGKGT). Positions 30–59 (STGDMLRTAVAQATEVGKRAKAVMDAGQLV) are NMP. AMP contacts are provided by residues T31, R36, 57 to 59 (QLV), 85 to 88 (GYPR), and Q92. The interval 126–142 (NRVTETVAAGGTVRSDD) is LID. R127 is a binding site for ATP. The AMP site is built by R139 and R150. Residue A178 coordinates ATP.

It belongs to the adenylate kinase family. In terms of assembly, monomer.

The protein resides in the cytoplasm. It carries out the reaction AMP + ATP = 2 ADP. Its pathway is purine metabolism; AMP biosynthesis via salvage pathway; AMP from ADP: step 1/1. Functionally, catalyzes the reversible transfer of the terminal phosphate group between ATP and AMP. Plays an important role in cellular energy homeostasis and in adenine nucleotide metabolism. The chain is Adenylate kinase from Rhizobium meliloti (strain 1021) (Ensifer meliloti).